The primary structure comprises 635 residues: Protein MICRORCHIDIA 1 (635 aa).

The disordered stretch occupies residues 491-511 (RTVIPDQPPTVNTYNPSPLPS). The stretch at 588-635 (MRCEEYVKKENEVEQTVKSLEKELEEIKSKCAQLALLVDAKKKEMQQV) forms a coiled coil.

The protein belongs to the MORC ATPase protein family. In terms of assembly, homodimer and heterodimer with MORC6. Component of an RNA-directed DNA methylation (RdDM) complex that contains at least MORC6, MORC1/CRT1, MORC2, SWI3D and SUVH9. Binds directly to SUVH2 and SUVH9. Interacts with the resistance proteins RCY1, RPM1, SNC1, RPP8, SSI4 and RPS2. The interactions with various resistance proteins are disrupted when these resistance proteins are activated. Interacts with the PAMP recognition receptor FLS2. The cofactor is Mg(2+). Mn(2+) serves as cofactor. As to expression, expressed constitutively.

The protein localises to the nucleus. It localises to the endosome. Functionally, mediator of defense signaling triggered by distinct classes of R proteins. Required during hypersensitive response (HR) that confers disease resistance to turnip crinkle virus (TCV). Exhibits ATPase activity. Contributes to resistance against Pseudomonas syringae and Hyaloperonospora arabidopsidis, at early stages prior to cytosolic calcium ions Ca(2+) accumulation. Required for pathogen-associated molecular pattern (PAMP)-triggered immunity (PTI), basal resistance, non-host resistance and systemic acquired resistance (SAR). Binds DNA/RNA in a non-specific manner and exhibits endonuclease activity. Probably involved in DNA repair. Required for both RPP8- and SSI4-mediated resistance responses, thus being involved in both TIR- and CC-NB-LRR pathways. Involved in RNA-directed DNA methylation (RdDM) as a component of the RdDM machinery and required for gene silencing. May also be involved in the regulation of chromatin architecture to maintain gene silencing. The protein is Protein MICRORCHIDIA 1 of Arabidopsis thaliana (Mouse-ear cress).